The chain runs to 61 residues: Small ribosomal subunit protein uS14 (61 aa).

Zn(2+) is bound by residues Cys-24, Cys-27, Cys-40, and Cys-43.

This sequence belongs to the universal ribosomal protein uS14 family. Zinc-binding uS14 subfamily. Part of the 30S ribosomal subunit. Contacts proteins S3 and S10. It depends on Zn(2+) as a cofactor.

Its function is as follows. Binds 16S rRNA, required for the assembly of 30S particles and may also be responsible for determining the conformation of the 16S rRNA at the A site. The protein is Small ribosomal subunit protein uS14 of Leptospira biflexa serovar Patoc (strain Patoc 1 / Ames).